Here is a 282-residue protein sequence, read N- to C-terminus: Bifunctional protein FolD (282 aa).

NADP(+)-binding positions include 165 to 167 (GAS) and Ile-231.

It belongs to the tetrahydrofolate dehydrogenase/cyclohydrolase family. In terms of assembly, homodimer.

The catalysed reaction is (6R)-5,10-methylene-5,6,7,8-tetrahydrofolate + NADP(+) = (6R)-5,10-methenyltetrahydrofolate + NADPH. It carries out the reaction (6R)-5,10-methenyltetrahydrofolate + H2O = (6R)-10-formyltetrahydrofolate + H(+). It functions in the pathway one-carbon metabolism; tetrahydrofolate interconversion. In terms of biological role, catalyzes the oxidation of 5,10-methylenetetrahydrofolate to 5,10-methenyltetrahydrofolate and then the hydrolysis of 5,10-methenyltetrahydrofolate to 10-formyltetrahydrofolate. This chain is Bifunctional protein FolD, found in Francisella tularensis subsp. tularensis (strain FSC 198).